The following is a 142-amino-acid chain: Large ribosomal subunit protein uL13 (142 aa).

Belongs to the universal ribosomal protein uL13 family. Part of the 50S ribosomal subunit.

Its function is as follows. This protein is one of the early assembly proteins of the 50S ribosomal subunit, although it is not seen to bind rRNA by itself. It is important during the early stages of 50S assembly. The polypeptide is Large ribosomal subunit protein uL13 (Shewanella oneidensis (strain ATCC 700550 / JCM 31522 / CIP 106686 / LMG 19005 / NCIMB 14063 / MR-1)).